Here is a 406-residue protein sequence, read N- to C-terminus: Probable endo-xylogalacturonan hydrolase A (406 aa).

The first 18 residues, 1–18 (MTLYRNLLLLASLGLSYA), serve as a signal peptide directing secretion. N84 is a glycosylation site (N-linked (GlcNAc...) asparagine). PbH1 repeat units lie at residues 183–213 (ATNV…DIGE) and 214–235 (STYV…ALKP). The active-site Proton donor is the D228. Residue H251 is part of the active site. 3 PbH1 repeats span residues 266 to 289 (VKNI…KTYP), 299 to 320 (VSNV…QIQS), and 333 to 375 (PGNA…SISG). N-linked (GlcNAc...) asparagine glycosylation is found at N278 and N301.

The protein belongs to the glycosyl hydrolase 28 family.

The protein resides in the secreted. Functionally, pectinolytic enzyme involved in the degradation of xylogalacturonan (xga), a galacturonan backbone heavily substituted with xylose, and which is one important component of the hairy regions of pectin. Activity requires a galacturonic acid backbone substituted with xylose. The chain is Probable endo-xylogalacturonan hydrolase A (xghA) from Aspergillus niger (strain ATCC MYA-4892 / CBS 513.88 / FGSC A1513).